The chain runs to 3914 residues: MSDNEPIAIIGSACRFPGDSSSPSKLWDLLKSPRDLLTKVPPNRYNADAFYHADSKHHGTTNVRHSYFLNEDPARFDNNFFNIQPGEAEAIDPQQRLLMEVVYQGLCASGQTIEGLRGSPTAVYVGVMCDDWSGIITRDLEVFPQYGATGMARSIMSNRISYFFDWHGPSMTIDTACSSSLVAVHQAIQTLRSGESEVAIAAGANLILTPGRSKMWDQDVNGYARGEGIAAVVLKPLSAAIRDNDHIDCIIRATGVNQDGRTPGLTMPSATAQADLIRSTYARAGLDINKPEDRPQFFHAHGTGTPAGDPREAEAIYRAFYSDVKDDKLYVGSIKTVLGHTEGTAGLASLIGTALAIQNKTIPPNMHFDVLNPKIKPFYDNLEVPTKAIAWPETHKGQPRRASINSFGFGGTNAHAIIEAYEPATTDSAPGPLFSPLTFSASSEPSLRSLLSSYSDHLKSNPDLSLKDLAYTLQTRRSTLAYRVAITASDVEDAYTQLDTIGNGEQSSTIGVRQVTKASPKIMGVLTGQGAQWPRMGARLVEESAFASQRLFELDEALSSLPKDDRPSWTLREMILADSKSSRIAEAAISQPLCTAVQVVLVDLLRQAGVELSSVVGHSSGEIGAAYAAGLLTARDAIRVAYYRGLYAKLAQSPNGRKGAMMAVGTTFDDASEFCELDAFQGRIQVAARNSSSSITLSGDEDAIVEAIETFKDEGKFARQLKVDTAYHSAHVLPCAKPYLDAMERCQIESANPTSTKWYSSVHDGQAMTAELLTPQYWVDNMTSAVLFSPAVEHAWREGGPYDVIIEVGPHPVLKTPCLDTLEDMTGDRPPYSGVLGREKDDIQQFASGLGFIWTQLGAGSATFERFEKVASDSKSIPSFIHDLPNYPFDHARQFMSMSRVSGWYNSMQEAPHPILGRRCHDRETSQTIQWRNVLNPKEIPWLHGHQIQGQIIFPATGYISMAIEAVNIIAGSDLGLVTIEDLRIGRALAFSDDDASVESMFDLRIISRSEKEIEAEFSCYSGLPQNHTTSMVLNATAHVKASLSVPTAQKLPNLKIDDFNLRKVEVDRFYDFLGRLGYNYSWPFHGTTSIRRKANYATGTLEDQSGSEWEDQLLVHPGMLDTSLQTTFAAFCCPGDERMWALHLPTSFRSIVVNPYFTSAGIGKQKSFQYQSVAIQERKASKVIVELNLLSEETGDTFLQIEGMELVPFSPATPENDAVLFSRFDYRLASPDGELTAAEYSFRDEDYKMALDSERIAFYYLRRLVETITPEDKANTLPHYRHLVEWAAHVVPQVIDGRNPHIPSSAQKDTHEDIQNILKKHYERVDVRLLESVGENLPQVIRENGNILEHMTKDGMLDDVYEEGFGLDLVNKYIAHMTAQIAHRYPRMNILEIGAGTGGSTREILPRLGSAFSTYTYTDVSGGFFDTAQDRFKDYAERMIFKTFDMNISPGSQGFTEGTYDLVIASNVLHATLELEDMMKHVRSFLKPGGFLIILETVNNDCLRVGLPMGSLPGWWLGAEHGRRWGPTLTLPQWDSLLWKCGFGGIDTTTPPVHKILPGHVFCAQALDDRVEILRSPLSHLSDLPETKSTELVIVGGETLKVHRMCEQISRRLKPKYASIARFNSIEELNTSGLADSCAVVSLTELDEPLFANMTSDKLDALKTLWKQGGSILWVTSGARDENPYSYMTTGVGRCMRFEYPNITLQALDIKAMTDRTPGLVAEHLLRLELLDKWSKELRPEELLWSLEPEIYVDDDTTIVPRLYPYESGNARYNAERRNIVEDADLQTDRVIFVENEGKWEVQHASPLHIPQELPFASKMKTIRITHFSPATINFAPGVSLMVCAGIDAASGERLLAVTHVAESPISVPADWCIPLGELDGVDTLANVSAFLIASSILKHVATEETLVVHGAPSRLASALEGLAKESSITVFLTTSERANKNGWQYIDSHLPERVIKASIPRSATKFINLSQDANMGETGRAISACLPRYCEVINTERLFIWGKLIRESVSKEDISIVFNRAFYETKSLSSTATDARLISLQDVSGVSAAEVRFAVVDCIDSSVKASIRPIDDGRIFQADKTFLLIGLSGELGQSLGKWMVEQGARNIVLTSRRPNVSQHFLDEMATMGATVKALPMDVTNRDSLHACVDTIQKTLPPIAGVVNGAMVLRDALFENMPYEDFMKVLSPKVLGSQLLDELFYDTPLDFFIFFSSTTAVMGNSGQSNYIAGNMFMNALAAQRKKRGVAASSIDISSIIGLGYVERAEDLSEDTFIKMGYKPMSEQDLQKLFAEAIVLGRPECDEVCELVTGVTPIYTDAQASDQYLKDVKFGHFLMERLDTQAYTGKTSTVPVRVQLADVKTKADAVAIIKGMFSLLTPVIIADLERFLHFEQGVDSLMAVEVRSWFIKELDIDIPVLKILGGMSVPDLIEESLNLISDSILDVSSLEAGSTPTTQPPKPTLQIARVTPPESSHGTSDDSKQQTGSDSSRSPIDTPLTSMEIQEPAKAEDSTDNSTPLKTFPNELSSIMSYGQAGFWFLNDYLVNKRAFNMAVMLKLTGQVRVQALEKAVNLVAERHEVLRTRFFWGDDGDERTPLQGINPADLKLTTKKVADESEAGMELKKLHDEEWDLSRGEGVKITLLSLSDNVHFLLLGMHHIYIDGYSFSVFFKDLEVAYTKNTLPSLPVESQYRSFALQQRQMYANGNLTKSIEYYRRSFPKEFSPIQLFPFALTPARQFANDYSQHEAKMSIDPELAPKVRQLARVNRSTSFHVYLAALELLLFTLLPNIEEVFIGIADANRGDKKFMGSLGFFLNLLPLRFRRKRRGTQLSSIIQTARDTAYGALQHSQLPFDVLLRELNVPRSDKYTPIFQVFMDYRQVVQERSSWGGCKLHGEKWHNAGTGYDIALEVNENITTDTLLGLRLQKQLYSEEHTALLLRSYLSVLEYMVQGTNKAADTVPPWSKDDIQVALDAGKAPEFQPKWQSTISHHIDQTIQANSTKVALKDGNGTVLTYEQMGNRVNSITQALIDAGTTQGTVVGVFQEPSSDWICSLLAIFKAGAVYVPLDLRNSIPRLASIVKASRPSLIITDHTTDDKVELIGAKYITQLQLSKVVDQEFKEPNRAKVGSLAVILFTSGSTGEPKGLMMTHTNLMSYAEVSSKTFSKPDESLMVLQQSPFSFDFSLDQTVAALANGGCLCIVPASKRGDPDEISKIMVKEGVTYTTATPSEYDLWLRYSTSTLRQCTSWKYAFSGGEAMSHKLAREFGTLSLKNLHVFNGYGPAETTILSHRIDLQYTDPDLPDPLPAGCPMPGFSVCIVDEKMRPVPLGVQGEIVLGGPCIVSGYLSMPDATKDKFLPDTFFGTSGKVYRSGDRGRLCHDGLLFCDGRLEDSNMIKLRGFRVELDEVEKTIISHSAGTLSHAVVTLRGTEEGRYLAAHVVFAPEFPEQNRESIMKTLRQTLPLPPYMRPSVFQILADIPRTAHLKVDRKAIQEMPVQISASHDSGTLTVAEQRLSELWRRVLPLDPGSLSPESDFFLIGGNSILLVKLQALLRQTFKTAPKLVALMGASTLGTMAVVLESCGSVGVIDWDQETALPNGLQGAVALRPVNKITDITVLLTGSAGYLGRHLVPALVEDPRVTRVHCLVRSVNNEKLSTSSSSKVRVIESDLSKPGLGLSASTYSRLAEETDVIIHSAANRSFWDRYEVLKPDNLDSVKELVRFAASSGRSIPLHFLSSGAVKIYDGDVVTPPTDGSDGYVATKWASETFLRNAAGSIGLPVYAHRPTVSSKAQTKTDQASIVDELFSIVKFLGVRPSFEGVTGSVDVLPTGDIVKAIQDSVLSSSAGGEGYNVLQHEAHQRAFVEDFAGVVRADDSLNKLPSISILDWFGKAKKAGFSYFLASQNLVMGEGEGHLVSRR.

The region spanning 4 to 420 (NEPIAIIGSA…GTNAHAIIEA (417 aa)) is the Ketosynthase family 3 (KS3) domain. Catalysis depends on for beta-ketoacyl synthase activity residues cysteine 177, histidine 301, and histidine 340. The segment at 525–847 (VLTGQGAQWP…REKDDIQQFA (323 aa)) is malonyl-CoA:ACP transacylase (MAT) domain. Positions 913-1047 (HPILGRRCHD…AHVKASLSVP (135 aa)) are N-terminal hotdog fold. The dehydratase (DH) domain stretch occupies residues 913–1214 (HPILGRRCHD…MELVPFSPAT (302 aa)). Residues 913-1216 (HPILGRRCHD…LVPFSPATPE (304 aa)) enclose the PKS/mFAS DH domain. The active-site Proton acceptor; for dehydratase activity is the histidine 946. Residues 1062-1216 (LRKVEVDRFY…LVPFSPATPE (155 aa)) form a C-terminal hotdog fold region. Catalysis depends on aspartate 1122, which acts as the Proton donor; for dehydratase activity. The methyltransferase (MT) domain stretch occupies residues 1364-1593 (EGFGLDLVNK…DLPETKSTEL (230 aa)). A ketoreductase (KR) domain region spans residues 2083–2255 (TFLLIGLSGE…VAASSIDISS (173 aa)). Residues 2356–2436 (LADVKTKADA…DLIEESLNLI (81 aa)) form the Carrier 1 domain. Serine 2396 is modified (O-(pantetheine 4'-phosphoryl)serine). Residues 2447 to 2518 (EAGSTPTTQP…DSTDNSTPLK (72 aa)) are disordered. Residues 2481–2500 (QQTGSDSSRSPIDTPLTSME) show a composition bias toward polar residues. Positions 2529–2956 (SYGQAGFWFL…VQGTNKAADT (428 aa)) are condensation (C) domain. The tract at residues 2991–3388 (QTIQANSTKV…LLFCDGRLED (398 aa)) is adenylation (A) (KR) domain. The Carrier 2 domain occupies 3502 to 3579 (GTLTVAEQRL…TMAVVLESCG (78 aa)). At serine 3539 the chain carries O-(pantetheine 4'-phosphoryl)serine. Residues 3615 to 3831 (LTGSAGYLGR…VLPTGDIVKA (217 aa)) are reductase (RED) domain.

In the C-terminal section; belongs to the NRP synthetase family.

It catalyses the reaction L-serine + 7 malonyl-CoA + acetyl-CoA + 2 S-adenosyl-L-methionine + ATP + 8 NADPH + 11 H(+) = (5S)-3-[(2E,6R,8E,10E,12E)-2,6-dimethyltetradeca-2,8,10,12-tetraenoyl]-5-(hydroxymethyl)pyrrolidine-2,4-dione + AMP + 2 S-adenosyl-L-homocysteine + 7 CO2 + diphosphate + 8 NADP(+) + 8 CoA + 6 H2O. It functions in the pathway mycotoxin biosynthesis. Hybrid PKS-NRPS synthetase; part of the gene cluster that mediates the biosynthesis of trichosetin, a trans-fused decalin-containing tetramic acid with antimicrobial activity. The PKS module of PKS-NRPS1 together with the enoylreductase (ER) catalyze the formation of the polyketide unit which is then conjugated to L-serine by the condensation domain of the PKS-NRPS1 NRPS module. Activity of the Dieckmann cyclase domain (RED) results in release of the Dieckmann product intermediate. Diels-Alderase (DA) is involved in endo-selective Diels-Alder cycloaddition to form the decalin ring, leading to the production of N-desmethylequisetin also called trichosetin. The cluster does not contain the equisetin N-methyltransferase and consequently, trichosetin is isolated as final product. In Gibberella fujikuroi (strain CBS 195.34 / IMI 58289 / NRRL A-6831) (Bakanae and foot rot disease fungus), this protein is Trichosetin synthetase PKS-NRPS1.